Consider the following 231-residue polypeptide: 5'-methylthioadenosine/S-adenosylhomocysteine nucleosidase (231 aa).

Glutamate 12 functions as the Proton acceptor in the catalytic mechanism. Substrate is bound by residues glycine 78, isoleucine 153, and 174 to 175; that span reads ME. Aspartate 198 (proton donor) is an active-site residue.

It belongs to the PNP/UDP phosphorylase family. MtnN subfamily.

It carries out the reaction S-adenosyl-L-homocysteine + H2O = S-(5-deoxy-D-ribos-5-yl)-L-homocysteine + adenine. The catalysed reaction is S-methyl-5'-thioadenosine + H2O = 5-(methylsulfanyl)-D-ribose + adenine. The enzyme catalyses 5'-deoxyadenosine + H2O = 5-deoxy-D-ribose + adenine. It participates in amino-acid biosynthesis; L-methionine biosynthesis via salvage pathway; S-methyl-5-thio-alpha-D-ribose 1-phosphate from S-methyl-5'-thioadenosine (hydrolase route): step 1/2. Functionally, catalyzes the irreversible cleavage of the glycosidic bond in both 5'-methylthioadenosine (MTA) and S-adenosylhomocysteine (SAH/AdoHcy) to adenine and the corresponding thioribose, 5'-methylthioribose and S-ribosylhomocysteine, respectively. Also cleaves 5'-deoxyadenosine, a toxic by-product of radical S-adenosylmethionine (SAM) enzymes, into 5-deoxyribose and adenine. The polypeptide is 5'-methylthioadenosine/S-adenosylhomocysteine nucleosidase (Shewanella putrefaciens (strain CN-32 / ATCC BAA-453)).